A 504-amino-acid chain; its full sequence is UDP-N-acetylmuramoylalanine--D-glutamate ligase (504 aa).

129–135 (GTNGKTT) lines the ATP pocket.

The protein belongs to the MurCDEF family.

Its subcellular location is the cytoplasm. It catalyses the reaction UDP-N-acetyl-alpha-D-muramoyl-L-alanine + D-glutamate + ATP = UDP-N-acetyl-alpha-D-muramoyl-L-alanyl-D-glutamate + ADP + phosphate + H(+). Its pathway is cell wall biogenesis; peptidoglycan biosynthesis. Functionally, cell wall formation. Catalyzes the addition of glutamate to the nucleotide precursor UDP-N-acetylmuramoyl-L-alanine (UMA). This Burkholderia thailandensis (strain ATCC 700388 / DSM 13276 / CCUG 48851 / CIP 106301 / E264) protein is UDP-N-acetylmuramoylalanine--D-glutamate ligase.